Consider the following 331-residue polypeptide: Putative lipoprotein YerB (331 aa).

Positions 1-19 are cleaved as a signal peptide; that stretch reads MKKWMTVCALCFVFFLLVS. The N-palmitoyl cysteine moiety is linked to residue C20. Residue C20 is the site of S-diacylglycerol cysteine attachment. Position 97 is a phosphothreonine (T97). Position 103 is a phosphoserine (S103).

Interacts with PcrA. The interaction is not essential for cell viability or repair of UV-induced lesions.

It localises to the cell membrane. The chain is Putative lipoprotein YerB (yerB) from Bacillus subtilis (strain 168).